An 84-amino-acid polypeptide reads, in one-letter code: Dolichol phosphate-mannose biosynthesis regulatory protein (84 aa).

Helical transmembrane passes span 11-31 and 49-69; these read LGLV…VILL and YAVA…GLFI.

Belongs to the DPM2 family. Component of the dolichol-phosphate mannose (DPM) synthase complex composed of DPM1, DPM2 and DPM3; in the complex interacts directly with DPM3. Component of the glycosylphosphatidylinositol-N-acetylglucosaminyltransferase (GPI-GnT) complex composed at least by PIGA, PIGC, PIGH, PIGP, PIGQ, PIGY and DPM2. Interacts with PIGA, PIGC and PIGQ.

The protein localises to the endoplasmic reticulum membrane. Its pathway is protein modification; protein glycosylation. In terms of biological role, regulates the biosynthesis of dolichol phosphate-mannose. Regulatory subunit of the dolichol-phosphate mannose (DPM) synthase complex; essential for the ER localization and stable expression of DPM1. Part of the glycosylphosphatidylinositol-N-acetylglucosaminyltransferase (GPI-GnT) complex that catalyzes the transfer of N-acetylglucosamine from UDP-N-acetylglucosamine to phosphatidylinositol and participates in the first step of GPI biosynthesis. May act by regulating the GPI-GNT complex. The polypeptide is Dolichol phosphate-mannose biosynthesis regulatory protein (Homo sapiens (Human)).